Consider the following 496-residue polypeptide: MLKIKLEKTTFENAKAECGLVFIVNKDFSHAWVKNKELLETFKYEGEGVFLDQENKILYVGVKEDDVHLLRESACLAVRTLKKLAFKSVKVGVYTCGAHSKDNALLENLKALFLGLKLGLYEYDTFKSNKKESVLKEAIVALELHKPCEKTCTNSLEKSAKEALKYAEIMTESLNIVRDLVNTPPMIGTPVYMAEVAQKVAKENHLEIHVHDEKFLEEKKMNAFLAVNKASLGVNPPRLIHLVYKPKKAKKKIALVGKGLTYDCGGLSLKPADYMVTMKADKGGGSAVIGLLNALAKLGVEAEVHGIIGATENMIGPAAYKPDDILISKEGKSIEVRNTDAEGRLVLADCLSYAQDLNPDVIVDFATLTGACVVGLGEFTSAIMGHNEELKNLFETSGLESGELLAKLPFNRHLKKLIESKIADVCNISSSRYGGAITAGLFLNEFIRDEFKDKWLHIDIAGPAYVEKEWDVNSFGASGAGVRACTAFVEELLKKA.

Lys258 and Asp263 together coordinate Mn(2+). The active site involves Lys270. The Mn(2+) site is built by Asp281, Asp340, and Glu342. The active site involves Arg344.

The protein belongs to the peptidase M17 family. Mn(2+) is required as a cofactor.

The protein resides in the cytoplasm. The enzyme catalyses Release of an N-terminal amino acid, Xaa-|-Yaa-, in which Xaa is preferably Leu, but may be other amino acids including Pro although not Arg or Lys, and Yaa may be Pro. Amino acid amides and methyl esters are also readily hydrolyzed, but rates on arylamides are exceedingly low.. It catalyses the reaction Release of an N-terminal amino acid, preferentially leucine, but not glutamic or aspartic acids.. In terms of biological role, presumably involved in the processing and regular turnover of intracellular proteins. Catalyzes the removal of unsubstituted N-terminal amino acids from various peptides. This chain is Probable cytosol aminopeptidase, found in Helicobacter pylori (strain HPAG1).